A 177-amino-acid chain; its full sequence is Nucleoside triphosphate/diphosphate phosphatase (177 aa).

Arginine 23 acts as the Proton donor in catalysis. Mg(2+)-binding residues include asparagine 87, aspartate 103, aspartate 105, aspartate 107, aspartate 120, and glutamate 123.

It belongs to the Ntdp family. The cofactor is Mg(2+).

The enzyme catalyses a ribonucleoside 5'-triphosphate + H2O = a ribonucleoside 5'-diphosphate + phosphate + H(+). It catalyses the reaction a ribonucleoside 5'-diphosphate + H2O = a ribonucleoside 5'-phosphate + phosphate + H(+). Its function is as follows. Has nucleoside phosphatase activity towards nucleoside triphosphates and nucleoside diphosphates. The sequence is that of Nucleoside triphosphate/diphosphate phosphatase from Streptococcus pneumoniae serotype 19F (strain G54).